We begin with the raw amino-acid sequence, 186 residues long: Thioredoxin M2, chloroplastic (186 aa).

Residues 1–72 (MAAFTCTSRP…RVSRLRRAVV (72 aa)) constitute a chloroplast transit peptide. Residues 73–186 (CEAQETTTDI…LTSSLDKFLP (114 aa)) form the Thioredoxin domain. Catalysis depends on nucleophile residues Cys-110 and Cys-113. An intrachain disulfide couples Cys-110 to Cys-113.

It belongs to the thioredoxin family. Plant M-type subfamily. In terms of assembly, interacts with G6PD1 and G6PD4. Interacts with PGL3.

It is found in the plastid. The protein resides in the chloroplast stroma. Thiol-disulfide oxidoreductase that may participate in various redox reactions. May activate NADP-malate dehydrogenase. The protein is Thioredoxin M2, chloroplastic of Arabidopsis thaliana (Mouse-ear cress).